We begin with the raw amino-acid sequence, 241 residues long: UPF0173 metal-dependent hydrolase Haur_4333 (241 aa).

It belongs to the UPF0173 family.

This chain is UPF0173 metal-dependent hydrolase Haur_4333, found in Herpetosiphon aurantiacus (strain ATCC 23779 / DSM 785 / 114-95).